Consider the following 216-residue polypeptide: MINTKCIHPVQNKWKGDLPCSGPGVLPTVIEQSGRGERAFDIYSRLLRERIIFLGTDVNDQIADALVAQMLFLEAEDPEKDIQLYINSPGGSVTAGLAIYDTMQQVNPDIVTMCYGLAASMGAFLLAGGSKGKRLALPNSRIMIHQPLGGAQGQAVEIEIQAKEILFLKETLNNLLAEHTGQSLEKISEDTDRDHFLSPQEAVEYGLIDKVVNSLN.

The active-site Nucleophile is the Ser-120. Residue His-145 is part of the active site.

It belongs to the peptidase S14 family. Fourteen ClpP subunits assemble into 2 heptameric rings which stack back to back to give a disk-like structure with a central cavity, resembling the structure of eukaryotic proteasomes.

The protein localises to the cytoplasm. The enzyme catalyses Hydrolysis of proteins to small peptides in the presence of ATP and magnesium. alpha-casein is the usual test substrate. In the absence of ATP, only oligopeptides shorter than five residues are hydrolyzed (such as succinyl-Leu-Tyr-|-NHMec, and Leu-Tyr-Leu-|-Tyr-Trp, in which cleavage of the -Tyr-|-Leu- and -Tyr-|-Trp bonds also occurs).. Cleaves peptides in various proteins in a process that requires ATP hydrolysis. Has a chymotrypsin-like activity. Plays a major role in the degradation of misfolded proteins. The polypeptide is ATP-dependent Clp protease proteolytic subunit 3 (Prochlorococcus marinus (strain SARG / CCMP1375 / SS120)).